A 593-amino-acid polypeptide reads, in one-letter code: Aspartate--tRNA ligase (593 aa).

E180 is an L-aspartate binding site. An aspartate region spans residues 204 to 207 (QLFK). Position 226 (R226) interacts with L-aspartate. ATP contacts are provided by residues 226–228 (RDE) and Q235. H454 provides a ligand contact to L-aspartate. E488 contributes to the ATP binding site. Position 495 (R495) interacts with L-aspartate. Position 540-543 (540-543 (GFDR)) interacts with ATP.

The protein belongs to the class-II aminoacyl-tRNA synthetase family. Type 1 subfamily. In terms of assembly, homodimer.

The protein resides in the cytoplasm. The catalysed reaction is tRNA(Asp) + L-aspartate + ATP = L-aspartyl-tRNA(Asp) + AMP + diphosphate. Catalyzes the attachment of L-aspartate to tRNA(Asp) in a two-step reaction: L-aspartate is first activated by ATP to form Asp-AMP and then transferred to the acceptor end of tRNA(Asp). The polypeptide is Aspartate--tRNA ligase (Clostridium novyi (strain NT)).